Consider the following 846-residue polypeptide: Translation initiation factor IF-2 (846 aa).

The disordered stretch occupies residues 94-263; sequence QRSPEEIQAE…HGFQNPTGPV (170 aa). The span at 96–135 shows a compositional bias: basic and acidic residues; sequence SPEEIQAEQKRELEERRAAENAARDKVEAEVRQRNEEQAR. Low complexity-rich tracts occupy residues 136–148 and 158–176; these read RQAA…APAP and AAPV…ASED. 2 stretches are compositionally biased toward basic and acidic residues: residues 177 to 206 and 230 to 239; these read AAAR…RGEA and TTDEESDGAR. Over residues 240–253 the composition is skewed to basic residues; it reads RGRGGKSKLKKRNQ. A tr-type G domain is found at 346-513; sequence SRAPVVTVMG…AVLLQAEILE (168 aa). The tract at residues 355-362 is G1; it reads GHVDHGKT. Residue 355 to 362 coordinates GTP; sequence GHVDHGKT. The interval 380–384 is G2; that stretch reads GITQH. The tract at residues 401-404 is G3; that stretch reads DTPG. GTP is bound by residues 401 to 405 and 455 to 458; these read DTPGH and NKID. The G4 stretch occupies residues 455–458; that stretch reads NKID. Residues 491-493 form a G5 region; sequence SAK.

It belongs to the TRAFAC class translation factor GTPase superfamily. Classic translation factor GTPase family. IF-2 subfamily.

It localises to the cytoplasm. Its function is as follows. One of the essential components for the initiation of protein synthesis. Protects formylmethionyl-tRNA from spontaneous hydrolysis and promotes its binding to the 30S ribosomal subunits. Also involved in the hydrolysis of GTP during the formation of the 70S ribosomal complex. The protein is Translation initiation factor IF-2 of Pseudomonas putida (strain ATCC 700007 / DSM 6899 / JCM 31910 / BCRC 17059 / LMG 24140 / F1).